Consider the following 286-residue polypeptide: 4-diphosphocytidyl-2-C-methyl-D-erythritol kinase (286 aa).

Residue K13 is part of the active site. ATP is bound at residue 99–109 (PMGGGLGGGSS). The active site involves D141.

It belongs to the GHMP kinase family. IspE subfamily.

It catalyses the reaction 4-CDP-2-C-methyl-D-erythritol + ATP = 4-CDP-2-C-methyl-D-erythritol 2-phosphate + ADP + H(+). It participates in isoprenoid biosynthesis; isopentenyl diphosphate biosynthesis via DXP pathway; isopentenyl diphosphate from 1-deoxy-D-xylulose 5-phosphate: step 3/6. Its function is as follows. Catalyzes the phosphorylation of the position 2 hydroxy group of 4-diphosphocytidyl-2C-methyl-D-erythritol. The sequence is that of 4-diphosphocytidyl-2-C-methyl-D-erythritol kinase from Herminiimonas arsenicoxydans.